The chain runs to 1166 residues: DNA-directed RNA polymerase subunit beta (1166 aa).

The protein belongs to the RNA polymerase beta chain family. The RNAP catalytic core consists of 2 alpha, 1 beta, 1 beta' and 1 omega subunit. When a sigma factor is associated with the core the holoenzyme is formed, which can initiate transcription.

It catalyses the reaction RNA(n) + a ribonucleoside 5'-triphosphate = RNA(n+1) + diphosphate. Functionally, DNA-dependent RNA polymerase catalyzes the transcription of DNA into RNA using the four ribonucleoside triphosphates as substrates. In Nocardioides sp. (strain ATCC BAA-499 / JS614), this protein is DNA-directed RNA polymerase subunit beta.